The primary structure comprises 40 residues: Photosystem II reaction center protein J (40 aa).

A helical transmembrane segment spans residues 8 to 28 (IPLWLIGTIAGILVIGLVGIF).

It belongs to the PsbJ family. PSII is composed of 1 copy each of membrane proteins PsbA, PsbB, PsbC, PsbD, PsbE, PsbF, PsbH, PsbI, PsbJ, PsbK, PsbL, PsbM, PsbT, PsbX, PsbY, PsbZ, Psb30/Ycf12, at least 3 peripheral proteins of the oxygen-evolving complex and a large number of cofactors. It forms dimeric complexes.

It localises to the plastid. It is found in the chloroplast thylakoid membrane. One of the components of the core complex of photosystem II (PSII). PSII is a light-driven water:plastoquinone oxidoreductase that uses light energy to abstract electrons from H(2)O, generating O(2) and a proton gradient subsequently used for ATP formation. It consists of a core antenna complex that captures photons, and an electron transfer chain that converts photonic excitation into a charge separation. In Anthoceros angustus (Hornwort), this protein is Photosystem II reaction center protein J.